A 285-amino-acid chain; its full sequence is MEMO1 family protein Igni_0992 (285 aa).

This sequence belongs to the MEMO1 family.

The sequence is that of MEMO1 family protein Igni_0992 from Ignicoccus hospitalis (strain KIN4/I / DSM 18386 / JCM 14125).